The primary structure comprises 500 residues: Glycerol kinase (500 aa).

Thr12 is an ADP binding site. ATP is bound by residues Thr12, Thr13, and Ser14. A sn-glycerol 3-phosphate-binding site is contributed by Thr12. Arg16 serves as a coordination point for ADP. The sn-glycerol 3-phosphate site is built by Arg82, Glu83, Tyr134, and Asp243. The glycerol site is built by Arg82, Glu83, Tyr134, Asp243, and Gln244. ADP contacts are provided by Thr265 and Gly308. Residues Thr265, Gly308, Gln312, and Gly411 each contribute to the ATP site. Residue Gly411 coordinates ADP.

Belongs to the FGGY kinase family.

The catalysed reaction is glycerol + ATP = sn-glycerol 3-phosphate + ADP + H(+). It participates in polyol metabolism; glycerol degradation via glycerol kinase pathway; sn-glycerol 3-phosphate from glycerol: step 1/1. Inhibited by fructose 1,6-bisphosphate (FBP). Its function is as follows. Key enzyme in the regulation of glycerol uptake and metabolism. Catalyzes the phosphorylation of glycerol to yield sn-glycerol 3-phosphate. This chain is Glycerol kinase, found in Chelativorans sp. (strain BNC1).